The primary structure comprises 109 residues: UPF0060 membrane protein RC1_3291 (109 aa).

4 helical membrane-spanning segments follow: residues 4–24, 31–51, 59–79, and 88–108; these read IATYLLAAVAEIGGCFAFWAW, PLWLIPGMASLALFAWALTRI, AYAAYGGIYILTSLVWMWLVE, and TLGTVLCVSGALVIIFGPRGG.

This sequence belongs to the UPF0060 family.

It localises to the cell inner membrane. The sequence is that of UPF0060 membrane protein RC1_3291 from Rhodospirillum centenum (strain ATCC 51521 / SW).